Here is a 335-residue protein sequence, read N- to C-terminus: Nucleoid-associated protein KPK_1538 (335 aa).

It belongs to the YejK family.

Its subcellular location is the cytoplasm. It is found in the nucleoid. This Klebsiella pneumoniae (strain 342) protein is Nucleoid-associated protein KPK_1538.